The chain runs to 151 residues: Large ribosomal subunit protein uL15 (151 aa).

The interval 37–57 (GMRGQKSRSGRPTRPGFEGGQ) is disordered.

It belongs to the universal ribosomal protein uL15 family. In terms of assembly, part of the 50S ribosomal subunit.

Functionally, binds to the 23S rRNA. This chain is Large ribosomal subunit protein uL15, found in Prochlorococcus marinus (strain MIT 9313).